The sequence spans 361 residues: Chorismate synthase (361 aa).

Position 47 (R47) interacts with NADP(+). FMN-binding positions include 124–126 (RAS), G286, 301–305 (KPTAT), and R327.

Belongs to the chorismate synthase family. As to quaternary structure, homotetramer. Requires FMNH2 as cofactor.

It carries out the reaction 5-O-(1-carboxyvinyl)-3-phosphoshikimate = chorismate + phosphate. It participates in metabolic intermediate biosynthesis; chorismate biosynthesis; chorismate from D-erythrose 4-phosphate and phosphoenolpyruvate: step 7/7. Catalyzes the anti-1,4-elimination of the C-3 phosphate and the C-6 proR hydrogen from 5-enolpyruvylshikimate-3-phosphate (EPSP) to yield chorismate, which is the branch point compound that serves as the starting substrate for the three terminal pathways of aromatic amino acid biosynthesis. This reaction introduces a second double bond into the aromatic ring system. The sequence is that of Chorismate synthase from Prochlorococcus marinus (strain NATL2A).